The chain runs to 300 residues: MSGKRVCPVCGSTEFIYDPSRGEIVCKVCGYVIEENVVDEGPEWRAFDPGQREKRARVGAPESILLHDKGLSTDIGIDRSLTGLMREKMYRLRKWQSRLRVSDAAERNLAFALSELDRLASNLSLPKHVEEEAARLYREAVRKGLIRGRSIEAVIAACVYAACRLLKVPRTLDEIADVSRVDKKEIGRSFRFIARHLNLTPKKLFVKPTDYVNKFADELGLSEKVRRRAIEILEEAYQRGLTSGKSPAGLVAAALYIASLMEGEKRTQREVAEVARVTEVTVRNRYKELVEKLNLKVPIA.

Residues 3-34 form a TFIIB-type zinc finger; it reads GKRVCPVCGSTEFIYDPSRGEIVCKVCGYVIE. Zn(2+) contacts are provided by Cys7, Cys10, Cys26, and Cys29. 2 repeat units span residues 114–197 and 210–291.

This sequence belongs to the TFIIB family.

In terms of biological role, stabilizes TBP binding to an archaeal box-A promoter. Also responsible for recruiting RNA polymerase II to the pre-initiation complex (DNA-TBP-TFIIB). In Thermococcus kodakarensis (strain ATCC BAA-918 / JCM 12380 / KOD1) (Pyrococcus kodakaraensis (strain KOD1)), this protein is Transcription initiation factor IIB 1.